The chain runs to 304 residues: Hairy/enhancer-of-split related with YRPW motif protein 1 (304 aa).

Residues 1–52 (MKRAHPEYSSSDSELDETIEVEKESADENGNLSSALGSMSPTTSSQILARKR) form a disordered region. The segment covering 28–47 (ENGNLSSALGSMSPTTSSQI) has biased composition (polar residues). A transcriptional repression and interaction with NCOR1 and SIN3A region spans residues 48–117 (LARKRRRGII…GGKGYFDAHA (70 aa)). In terms of domain architecture, bHLH spans 49 to 104 (ARKRRRGIIEKRRRDRINNSLSELRRLVPSAFEKQGSAKLEKAEILQMTVDHLKML). The Orange domain occupies 122–158 (YRSLGFRECLAEVARYLSIIEGLDASDPLRVRLVSHL). Positions 196–234 (LPQNGHGNAGTTASPTEPHHQGRLGSAHPEAPALRAPPS) are disordered. Polar residues predominate over residues 200–210 (GHGNAGTTASP). A YRPW motif motif is present at residues 294-297 (YRPW).

It belongs to the HEY family. Self-associates. Interacts with HES1 and HEYL. Interacts with HDAC1, NCOR1 and SIN3A. Interacts with GATA4 and GATA6. Interacts with CCDC89/BOIP. Expressed in the somitic mesoderm, the central nervous system, the kidney, the heart, nasal epithelium, and limbs.

It localises to the nucleus. Transcriptional repressor which binds preferentially to the canonical E box sequence 5'-CACGTG-3'. Downstream effector of Notch signaling required for cardiovascular development. Specifically required for the Notch-induced endocardial epithelial to mesenchymal transition, which is itself criticial for cardiac valve and septum development. May be required in conjunction with HEY2 to specify arterial cell fate or identity. Promotes maintenance of neuronal precursor cells and glial versus neuronal fate specification. Represses transcription by the cardiac transcriptional activators GATA4 and GATA6 and by the neuronal bHLH factors ASCL1/MASH1 and NEUROD4/MATH3. Involved in the regulation of liver cancer cells self-renewal. This Homo sapiens (Human) protein is Hairy/enhancer-of-split related with YRPW motif protein 1 (HEY1).